We begin with the raw amino-acid sequence, 161 residues long: Cell division protein SepF 2 (161 aa).

A disordered region spans residues 19–47; the sequence is EDSEKAPELSSSRETKTKNQNQSKSLLRS. A compositionally biased stretch (basic and acidic residues) spans 21–35; that stretch reads SEKAPELSSSRETKT.

This sequence belongs to the SepF family. Homodimer. Interacts with FtsZ.

The protein localises to the cytoplasm. Cell division protein that is part of the divisome complex and is recruited early to the Z-ring. Probably stimulates Z-ring formation, perhaps through the cross-linking of FtsZ protofilaments. Its function overlaps with FtsA. This is Cell division protein SepF 2 from Desulforamulus reducens (strain ATCC BAA-1160 / DSM 100696 / MI-1) (Desulfotomaculum reducens).